The chain runs to 323 residues: Transcriptional regulator protein Pur-beta-A (323 aa).

Disordered stretches follow at residues 1-34 (MADGDSGSERGGSSGGPGGFSQHMSREQETQELA), 100-122 (SPEQIAQASGEDGAGGPGGPRRA), and 286-323 (QERQRDKMYERRGPGDRERSLGPGGGGDDSETEDVDDD). Alanine 2 carries the N-acetylalanine modification. The segment covering 9–19 (ERGGSSGGPGG) has biased composition (gly residues). The span at 24–34 (MSREQETQELA) shows a compositional bias: basic and acidic residues. The tract at residues 27–257 (EQETQELATK…LRVSEVKPSY (231 aa)) is DNA-binding. Positions 286–305 (QERQRDKMYERRGPGDRERS) are enriched in basic and acidic residues. The span at 313 to 323 (DDSETEDVDDD) shows a compositional bias: acidic residues.

The protein belongs to the PUR DNA-binding protein family.

The protein localises to the nucleus. Its function is as follows. Transcriptional regulator which can act as an activator or a repressor. This is Transcriptional regulator protein Pur-beta-A (purb-a) from Xenopus laevis (African clawed frog).